The following is a 289-amino-acid chain: 4-hydroxy-tetrahydrodipicolinate synthase (289 aa).

Thr46 contacts pyruvate. Tyr134 (proton donor/acceptor) is an active-site residue. The active-site Schiff-base intermediate with substrate is the Lys162. Val204 is a pyruvate binding site.

It belongs to the DapA family. As to quaternary structure, homotetramer; dimer of dimers.

The protein localises to the cytoplasm. The catalysed reaction is L-aspartate 4-semialdehyde + pyruvate = (2S,4S)-4-hydroxy-2,3,4,5-tetrahydrodipicolinate + H2O + H(+). It functions in the pathway amino-acid biosynthesis; L-lysine biosynthesis via DAP pathway; (S)-tetrahydrodipicolinate from L-aspartate: step 3/4. Functionally, catalyzes the condensation of (S)-aspartate-beta-semialdehyde [(S)-ASA] and pyruvate to 4-hydroxy-tetrahydrodipicolinate (HTPA). The chain is 4-hydroxy-tetrahydrodipicolinate synthase from Bacillus velezensis (strain DSM 23117 / BGSC 10A6 / LMG 26770 / FZB42) (Bacillus amyloliquefaciens subsp. plantarum).